Consider the following 92-residue polypeptide: UPF0473 protein Cbei_1107 (92 aa).

The protein belongs to the UPF0473 family.

This is UPF0473 protein Cbei_1107 from Clostridium beijerinckii (strain ATCC 51743 / NCIMB 8052) (Clostridium acetobutylicum).